The primary structure comprises 373 residues: MYEKINEPLSIRGLKLKNRIVFAPTTMGLSEEEYLERLGIIAAGGAAMLVIGDVPVLRHSLFAKSLYSTKGFEFYRRVTEVIHKNGAKACAQLHVSDSDIKGMLRFVPGMLMKRITPDRLRELMNERTGPYITGIPESKIGKITASFGDAAVLAGKAGFDMIQVHGDRMCGSFSSSVFNHRTDSYGASAANRAKFACECIAAVRQALPDMPVEYKLAVRQENPHYGNAGILVEELPVFLPLLEKAGVDSYHVALADHSSLSDTIPPKSHPYFSGEGCFLKYCDEVKKYSSLPVCAVGGLTNPDFVEEQLTRSRIDYAAMSRQLIADPEWPNKTAGKNQDKIRFCVRCNRECLGGMMEHRGVHCIYDKKKEDVQ.

Gln92 is a binding site for FMN. Residue Arg168 is the Proton donor of the active site. Lys215 lines the FMN pocket. [4Fe-4S] cluster-binding residues include Cys344, Cys347, Cys351, and Cys363.

The protein belongs to the NADH:flavin oxidoreductase/NADH oxidase family. It depends on FMN as a cofactor. [4Fe-4S] cluster serves as cofactor.

It carries out the reaction urobilinogen + 4 A = (4Z,15Z)-bilirubin IXalpha + 4 AH2. The catalysed reaction is urobilinogen + 2 A = (4Z,15Z)-mesobilirubin IXalpha + 2 AH2. Its pathway is porphyrin-containing compound metabolism; protoheme degradation. Functionally, bilirubin reductase that catalyzes reduction of mesobilirubin and/or bilirubin to urobilinogen, a key step during heme degradation. Cooperates with BilS, which is probably involved in electron transfer for BilR. Urobilinogen then spontaneously degrades into urobilin, which gives urine its distinctive yellow color. The polypeptide is Bilirubin reductase (Clostridium symbiosum (strain WAL-14163)).